We begin with the raw amino-acid sequence, 516 residues long: Apolipoprotein N-acyltransferase (516 aa).

6 helical membrane passes run 24-44 (LAQA…LLYL), 58-78 (GWCY…ISIH), 90-110 (LLTL…AWLW), 125-145 (LAFA…LTGF), 163-183 (APLG…ALLV), and 192-212 (PPAL…GLAL). The 242-residue stretch at 230-471 (VQGNVEQNLK…RAVLYGEVTP (242 aa)) folds into the CN hydrolase domain. Glu270 acts as the Proton acceptor in catalysis. Lys331 is an active-site residue. The active-site Nucleophile is the Cys383. Residues 479-499 (LRWRAWPLAGLAVLLLGWALL) form a helical membrane-spanning segment.

Belongs to the CN hydrolase family. Apolipoprotein N-acyltransferase subfamily.

The protein resides in the cell inner membrane. The enzyme catalyses N-terminal S-1,2-diacyl-sn-glyceryl-L-cysteinyl-[lipoprotein] + a glycerophospholipid = N-acyl-S-1,2-diacyl-sn-glyceryl-L-cysteinyl-[lipoprotein] + a 2-acyl-sn-glycero-3-phospholipid + H(+). Its pathway is protein modification; lipoprotein biosynthesis (N-acyl transfer). In terms of biological role, catalyzes the phospholipid dependent N-acylation of the N-terminal cysteine of apolipoprotein, the last step in lipoprotein maturation. The sequence is that of Apolipoprotein N-acyltransferase from Azotobacter vinelandii (strain DJ / ATCC BAA-1303).